The following is a 116-amino-acid chain: MAGRSGDSDEELIKTVRIIKHLYQSNPPPKPEGTRQARRNRRRRWRERQRRIHSISAWLLSTCLGRSAEPVPLQLPPLERLTLDCSEDCGTSGTQGVGSPQILVESPAVLESGTKE.

2 positions are modified to phosphoserine; by host CK2: S5 and S8. Positions 18 to 26 are homomultimerization; it reads IIKHLYQSN. The segment at 20 to 48 is disordered; the sequence is KHLYQSNPPPKPEGTRQARRNRRRRWRER. The Nuclear localization signal and RNA-binding (RRE) signature appears at 34–50; it reads TRQARRNRRRRWRERQR. Residues 36-48 are compositionally biased toward basic residues; it reads QARRNRRRRWRER. A Nuclear export signal and binding to XPO1 motif is present at residues 73-84; the sequence is LQLPPLERLTLD. The disordered stretch occupies residues 91–116; that stretch reads TSGTQGVGSPQILVESPAVLESGTKE. Residues S92 and S99 each carry the phosphoserine; by host modification.

The protein belongs to the HIV-1 REV protein family. In terms of assembly, homomultimer; when bound to the RRE. Multimeric assembly is essential for activity and may involve XPO1. Binds to human KPNB1, XPO1, TNPO1, RANBP5 and IPO7. Interacts with the viral Integrase. Interacts with human KHDRBS1. Interacts with human NAP1; this interaction decreases Rev multimerization and stimulates its activity. Interacts with human DEAD-box helicases DDX3 and DDX24; these interactions may serve for viral RNA export to the cytoplasm and packaging, respectively. Interacts with human PSIP1; this interaction may inhibit HIV-1 DNA integration by promoting dissociation of the Integrase-LEDGF/p75 complex. In terms of processing, asymmetrically arginine dimethylated at one site by host PRMT6. Methylation impairs the RNA-binding activity and export of viral RNA from the nucleus to the cytoplasm. Phosphorylated by protein kinase CK2. Presence of, and maybe binding to the N-terminus of the regulatory beta subunit of CK2 is necessary for CK2-mediated Rev's phosphorylation.

The protein localises to the host nucleus. The protein resides in the host nucleolus. It is found in the host cytoplasm. Its function is as follows. Escorts unspliced or incompletely spliced viral pre-mRNAs (late transcripts) out of the nucleus of infected cells. These pre-mRNAs carry a recognition sequence called Rev responsive element (RRE) located in the env gene, that is not present in fully spliced viral mRNAs (early transcripts). This function is essential since most viral proteins are translated from unspliced or partially spliced pre-mRNAs which cannot exit the nucleus by the pathway used by fully processed cellular mRNAs. Rev itself is translated from a fully spliced mRNA that readily exits the nucleus. Rev's nuclear localization signal (NLS) binds directly to KPNB1/Importin beta-1 without previous binding to KPNA1/Importin alpha-1. KPNB1 binds to the GDP bound form of RAN (Ran-GDP) and targets Rev to the nucleus. In the nucleus, the conversion from Ran-GDP to Ran-GTP dissociates Rev from KPNB1 and allows Rev's binding to the RRE in viral pre-mRNAs. Rev multimerization on the RRE via cooperative assembly exposes its nuclear export signal (NES) to the surface. Rev can then form a complex with XPO1/CRM1 and Ran-GTP, leading to nuclear export of the complex. Conversion from Ran-GTP to Ran-GDP mediates dissociation of the Rev/RRE/XPO1/RAN complex, so that Rev can return to the nucleus for a subsequent round of export. Beside KPNB1, also seems to interact with TNPO1/Transportin-1, RANBP5/IPO5 and IPO7/RANBP7 for nuclear import. The nucleoporin-like HRB/RIP is an essential cofactor that probably indirectly interacts with Rev to release HIV RNAs from the perinuclear region to the cytoplasm. The protein is Protein Rev of Human immunodeficiency virus type 1 group M subtype B (isolate CDC-451) (HIV-1).